Here is a 24-residue protein sequence, read N- to C-terminus: Caerulein precursor fragment B4 (24 aa).

As to expression, expressed by the skin glands.

The protein localises to the secreted. Its function is as follows. Has antibacterial and antifungal activity. The protein is Caerulein precursor fragment B4 of Xenopus borealis (Kenyan clawed frog).